The chain runs to 339 residues: Silicatein (339 aa).

Residues 1–18 (MAIVYGAILFQIILIACA) form the signal peptide. The propeptide occupies 19 to 122 (EFPPEWHAWK…REYQAPATVS (104 aa)). N,N-dimethylleucine; alternate is present on L123. L123 carries the N-methylleucine; alternate modification. Phosphoserine is present on S188. At Y219 the chain carries Phosphotyrosine. Active-site residues include H286 and N306. S335 carries the phosphoserine modification.

It belongs to the peptidase C1 family. As to quaternary structure, homodimer. Homodimerization occurs as a result of non-covalent interactions and not through disulfide linkages between the two monomers.

Functionally, polymerizes silica around the axial filament during spicule formation. The chain is Silicatein from Petrosia ficiformis (Common Mediterranean sponge).